The following is a 225-amino-acid chain: RNA-binding protein 24 (225 aa).

The 78-residue stretch at 11 to 88 folds into the RRM domain; the sequence is TKIFVGGLPY…RKANVNLAYL (78 aa).

The protein localises to the nucleus. It is found in the cytoplasm. In terms of biological role, multifunctional RNA-binding protein involved in the regulation of pre-mRNA splicing, mRNA stability and mRNA translation important for cell fate decision and differentiation. Plays a major role in pre-mRNA alternative splicing regulation. Mediates preferentially muscle-specific exon inclusion in numerous mRNAs important for striated cardiac and skeletal muscle cell differentiation. Binds to intronic splicing enhancer (ISE) composed of stretches of GU-rich motifs localized in flanking intron of exon that will be included by alternative splicing. Involved in embryonic stem cell (ESC) transition to cardiac cell differentiation by promoting pre-mRNA alternative splicing events of several pluripotency and/or differentiation genes. Plays a role in the regulation of mRNA stability and mRNA translation to which it is bound. Involved in myogenic differentiation by regulating MYOG levels. Binds to a huge amount of mRNAs. Involved in embryonic heart development and myogenic differentiation of somitic muscle progenitors. The chain is RNA-binding protein 24 from Gallus gallus (Chicken).